Consider the following 349-residue polypeptide: UDP-N-acetylenolpyruvoylglucosamine reductase (349 aa).

Positions 25-197 constitute an FAD-binding PCMH-type domain; that stretch reads GIAARARFAA…VAVTFRLPKQ (173 aa). R173 is a catalytic residue. Catalysis depends on S249, which acts as the Proton donor. The active site involves E345.

This sequence belongs to the MurB family. Requires FAD as cofactor.

It is found in the cytoplasm. It catalyses the reaction UDP-N-acetyl-alpha-D-muramate + NADP(+) = UDP-N-acetyl-3-O-(1-carboxyvinyl)-alpha-D-glucosamine + NADPH + H(+). It functions in the pathway cell wall biogenesis; peptidoglycan biosynthesis. Cell wall formation. In Burkholderia orbicola (strain MC0-3), this protein is UDP-N-acetylenolpyruvoylglucosamine reductase.